Consider the following 335-residue polypeptide: Tryptophan--tRNA ligase (335 aa).

ATP is bound by residues 13-15 (QPS) and 21-22 (GN). Positions 14–22 (PSGNLTIGN) match the 'HIGH' region motif. Position 136 (D136) interacts with L-tryptophan. ATP is bound by residues 148-150 (GQD), I187, and 196-200 (KMSKS). Positions 196–200 (KMSKS) match the 'KMSKS' region motif.

The protein belongs to the class-I aminoacyl-tRNA synthetase family. In terms of assembly, homodimer.

The protein resides in the cytoplasm. It catalyses the reaction tRNA(Trp) + L-tryptophan + ATP = L-tryptophyl-tRNA(Trp) + AMP + diphosphate + H(+). Functionally, catalyzes the attachment of tryptophan to tRNA(Trp). This Buchnera aphidicola subsp. Acyrthosiphon pisum (strain APS) (Acyrthosiphon pisum symbiotic bacterium) protein is Tryptophan--tRNA ligase.